A 125-amino-acid polypeptide reads, in one-letter code: Plastocyanin (125 aa).

Positions 1–34 (MKVLASFARRLSLFAVAAVLCVGSFFLSAAPASA) are cleaved as a signal peptide. The 91-residue stretch at 35–125 (QTVAIKMGAD…AGMVGKIVVQ (91 aa)) folds into the Plastocyanin-like domain. Positions 73, 110, 113, and 118 each coordinate Cu cation.

The protein belongs to the plastocyanin family. Cu(2+) is required as a cofactor.

The protein resides in the cellular thylakoid membrane. In terms of biological role, participates in electron transfer between P700 and the cytochrome b6-f complex in photosystem I. This is Plastocyanin (petE) from Synechococcus elongatus (strain ATCC 33912 / PCC 7942 / FACHB-805) (Anacystis nidulans R2).